A 375-amino-acid polypeptide reads, in one-letter code: Probable L-tyrosine/L-aspartate decarboxylase (375 aa).

The residue at position 226 (lysine 226) is an N6-(pyridoxal phosphate)lysine.

It belongs to the group II decarboxylase family. MfnA subfamily. It depends on pyridoxal 5'-phosphate as a cofactor.

It carries out the reaction L-tyrosine + H(+) = tyramine + CO2. The catalysed reaction is L-aspartate + H(+) = beta-alanine + CO2. The protein operates within cofactor biosynthesis; methanofuran biosynthesis. It functions in the pathway cofactor biosynthesis; coenzyme A biosynthesis. Catalyzes the decarboxylation of L-tyrosine to produce tyramine for methanofuran biosynthesis. Can also catalyze the decarboxylation of L-aspartate to produce beta-alanine for coenzyme A (CoA) biosynthesis. In Methanocella arvoryzae (strain DSM 22066 / NBRC 105507 / MRE50), this protein is Probable L-tyrosine/L-aspartate decarboxylase.